Consider the following 1198-residue polypeptide: Potassium/sodium hyperpolarization-activated cyclic nucleotide-gated channel 4 (1198 aa).

Over 1-266 (MDKLPPSMRK…PYSDFRFYWD (266 aa)) the chain is Cytoplasmic. Residues 25 to 183 (IMDEEEDGEE…PASASCEQPS (159 aa)) are disordered. Positions 26-36 (MDEEEDGEEEG) are enriched in acidic residues. The segment covering 105–118 (SRGGGSGGAGGGSS) has biased composition (gly residues). Basic and acidic residues predominate over residues 121–132 (HLHDSAEERRLI). Ser-139 carries the post-translational modification Phosphoserine. The segment covering 164–174 (ASPPPQQPPQP) has biased composition (pro residues). The involved in subunit assembly stretch occupies residues 209–260 (GQSGFMQRQFGAMLQPGVNKFSLRMFGSQKAVEREQERVKSAGFWIIHPYSD). The chain crosses the membrane as a helical span at residues 267 to 287 (LTMLLLMVGNLIIIPVGITFF). Over 288-293 (KDENTT) the chain is Extracellular. A helical membrane pass occupies residues 294–314 (PWIVFNVVSDTFFLIDLVLNF). The Cytoplasmic portion of the chain corresponds to 315–340 (RTGIVVEDNTEIILDPQRIKMKYLKS). Residues 341–361 (WFVVDFISSIPVDYIFLIVET) traverse the membrane as a helical segment. Residues 362–368 (RIDSEVY) lie on the Extracellular side of the membrane. The helical; Voltage-sensor transmembrane segment at 369-389 (KTARALRIVRFTKILSLLRLL) threads the bilayer. Over 390–420 (RLSRLIRYIHQWEEIFHMTYDLASAVVRIVN) the chain is Cytoplasmic. A helical transmembrane segment spans residues 421–441 (LIGMMLLLCHWDGCLQFLVPM). The Extracellular portion of the chain corresponds to 442–464 (LQDFPHDCWVSINGMVNNSWGKQ). A glycan (N-linked (GlcNAc...) asparagine) is linked at Asn-458. The pore-forming intramembrane region spans 465–486 (YSYALFKAMSHMLCIGYGRQAP). The Extracellular segment spans residues 487–496 (VGMSDVWLTM). Residues 497–517 (LSMIVGATCYAMFIGHATALI) traverse the membrane as a helical segment. At 518–1198 (QSLDSSRRQY…PVRSKLPSNL (681 aa)) the chain is on the cytoplasmic side. 3',5'-cyclic GMP-binding residues include Tyr-559, Lys-562, Phe-564, and Glu-566. The 3',5'-cyclic AMP site is built by Gly-659, Glu-660, Cys-662, Arg-669, Thr-670, Val-673, and Arg-710. Residues 804–1198 (AIFRPPPGPG…PVRSKLPSNL (395 aa)) form a disordered region. 2 stretches are compositionally biased toward low complexity: residues 831–856 (SLIPSALGSASPASSPSQVDTPSSSS) and 866–880 (SAPPGLSPLLPSSSS). The span at 881–894 (SPPPGACSSPPAPT) shows a compositional bias: pro residues. Low complexity-rich tracts occupy residues 895–905 (PSTSTAATTTG), 913–937 (LGGSLSSSDSPLLTPLQPGARSPQA), and 965–985 (RSPSSSPGQLGQPPGELSPGL). Over residues 1027-1040 (GHSPGPPRTFPSAP) the composition is skewed to pro residues. The segment covering 1043–1054 (ASGSHGSLLLPP) has biased composition (low complexity). 2 positions are modified to phosphoserine: Ser-1103 and Ser-1106. Positions 1120 to 1132 (AGGGSGSSGGLGP) are enriched in gly residues.

This sequence belongs to the potassium channel HCN family. Homotetramer. The potassium channel is composed of a homo- or heterotetrameric complex of pore-forming subunits. Interacts with PEX5L with a 4:4 HCN4:PEX5L stoichiometry; reduces the effects of cAMP on the voltage-dependence and rate of activation. Interacts with IRAG1; regulates HCN4 channel activity. Interacts with IRAG2; regulates HCN4 channel activity. In terms of processing, S-palmitoylated. Highly expressed in pyramidal and granule layer of the hippocampus, in thalamus anterior nucleus, in the supraoptic nucleus in hypothalamus, in cerebellum, and in trapezoid nuclei and superior olivary complex in the auditory system. Detected in a subset of elongated cells in taste buds.

It is found in the cell membrane. It carries out the reaction K(+)(in) = K(+)(out). The catalysed reaction is Na(+)(in) = Na(+)(out). Activated by cAMP and at 100 times higher concentrationsand to a lesser extent by cGMP and cCMP. cAMP binding causes a conformation change that leads to the assembly of an active tetramer and channel opening. Binding of cAMP removes a tonic inhibition conferred by cyclic nucleotide-binding domain (CNBD) on channel opening. Cyclic dinucleotides can modulate HCN4 channel; cyclic dinucleotides acting as potent antagonists of cAMP. Inhibited by extracellular Cs(+) ions. Auxiliary subunits can also regulate HCN4 channel. IRAG1 causes a gain-of-function by shifting HCN4 activation to more depolarized membrane potentials in the absence of cAMP. In contrast, IRAG2 causes a loss-of-function by inhibiting cAMP-dependent potentiation of HCN4 activation. In terms of biological role, hyperpolarization-activated ion channel that are permeable to Na(+) and K(+) ions with very slow activation and inactivation. Exhibits higher selectivity for K(+) over Na(+) ions. Contributes to the native pacemaker currents in heart (If) that regulate the rhythm of heart beat. Contributes to the native pacemaker currents in neurons (Ih). May mediate responses to sour stimuli. This is Potassium/sodium hyperpolarization-activated cyclic nucleotide-gated channel 4 (Hcn4) from Rattus norvegicus (Rat).